A 66-amino-acid chain; its full sequence is Protein translocase subunit SecE (66 aa).

Residues 41–61 form a helical membrane-spanning segment; that stretch reads LAVMFIVGFVGFVIYILMEIL.

It belongs to the SecE/SEC61-gamma family. Component of the Sec protein translocase complex. Heterotrimer consisting of SecY (alpha), SecG (beta) and SecE (gamma) subunits. The heterotrimers can form oligomers, although 1 heterotrimer is thought to be able to translocate proteins. Interacts with the ribosome. May interact with SecDF, and other proteins may be involved.

The protein localises to the cell membrane. Functionally, essential subunit of the Sec protein translocation channel SecYEG. Clamps together the 2 halves of SecY. May contact the channel plug during translocation. The polypeptide is Protein translocase subunit SecE (Archaeoglobus fulgidus (strain ATCC 49558 / DSM 4304 / JCM 9628 / NBRC 100126 / VC-16)).